Here is a 607-residue protein sequence, read N- to C-terminus: MEGGGEALFLDGVGEVTVAVGDDGLSFQPLHQEVSSSCWSSIIMQPKLESKLKFSDVYAVELLEVGPVCEPWNARATVQGKINTEMNRFVIHTVTRPRKRPSPWVPCEYIFGHKDQQTCKTWVEHIKTCINKEQDRPKSLMVFVHPLCGKGRGCKNWETVAPLFERAKVKTKVIVTQRAGHAYDTLASLSDKDLKKFDGVIAVGGDGLFNEILNGLLSTRHTNSYPPTPEGFGYFRNNMKCQEHRNNDLSNSELTGDDANAISGSSNTPDDHEPLLSTTRSTGLDISSSDSSDEPCNGDQVPLVSFPNNWFRLGIIPSGSTDAIVLSTTGERDPVTSALLIILGRRISLDIAQVVRWKSSPSAEVSPTVRYAASFAGYGFYGEVIRESEKYRWMGPARYDFSGTMVFLKHRSYEAKVAFLENGNTHSLTASAENNANGVQTLQYHQNRHRKTICRTNCLICKGTSTSEQNSEDENPDSSRTACETPKWVWSKGRFLSVGAAVISCRNERAPDGLVADAHLSDGFLHLLLIRDCPLPFYLWHLTQFTKKGSDPLSFKFVEHHKTQAFTFISSHDESVWNLDGELLQACEVSVQAFRGLVNLFASGPEV.

Residues 135–358 form the DAGKc domain; that stretch reads DRPKSLMVFV…LDIAQVVRWK (224 aa). ATP-binding positions include 145–149, threonine 176, and 205–211; these read HPLCG and GDGLFNE. 204–207 is a substrate binding site; that stretch reads GGDG. The Proton donor/acceptor role is filled by aspartate 206. Residues 247–297 form a disordered region; that stretch reads NDLSNSELTGDDANAISGSSNTPDDHEPLLSTTRSTGLDISSSDSSDEPCN. A compositionally biased stretch (polar residues) spans 276-286; the sequence is LSTTRSTGLDI. ATP is bound at residue serine 320. The CXXXCXXC signature appears at 454 to 461; the sequence is CRTNCLIC.

It depends on Ca(2+) as a cofactor. The cofactor is Mg(2+). Highly expressed in leaves and at lower levels in stems.

The catalysed reaction is an N-acylsphing-4-enine + ATP = an N-acylsphing-4-enine 1-phosphate + ADP + H(+). Its function is as follows. Catalyzes specifically the phosphorylation of ceramide to form ceramide 1-phosphate. Possesses activity on ceramide analog (C6 synthetic ceramide) in vitro. Ceramide is a critical sphingolipid metabolite that induces programmed cell death (PCD) in plants and ceramide-1-phosphate has a PCD suppressive effect. Thus, ceramide phosphorylation plays a role in the modulation of PCD and CERK activity is crucial for the maintenance of cell viability. The polypeptide is Ceramide kinase (CERK) (Oryza sativa subsp. japonica (Rice)).